A 191-amino-acid chain; its full sequence is Large ribosomal subunit protein uL5 (191 aa).

It belongs to the universal ribosomal protein uL5 family. Part of the 50S ribosomal subunit; part of the 5S rRNA/L5/L18/L25 subcomplex. Contacts the 5S rRNA and the P site tRNA. Forms a bridge to the 30S subunit in the 70S ribosome.

Its function is as follows. This is one of the proteins that bind and probably mediate the attachment of the 5S RNA into the large ribosomal subunit, where it forms part of the central protuberance. In the 70S ribosome it contacts protein S13 of the 30S subunit (bridge B1b), connecting the 2 subunits; this bridge is implicated in subunit movement. Contacts the P site tRNA; the 5S rRNA and some of its associated proteins might help stabilize positioning of ribosome-bound tRNAs. The chain is Large ribosomal subunit protein uL5 from Micrococcus luteus (Micrococcus lysodeikticus).